A 218-amino-acid polypeptide reads, in one-letter code: Large ribosomal subunit protein uL3 (218 aa).

The segment at 134-154 (GRASHGNSRSHNVPGSIGMAQ) is disordered. Q154 is subject to N5-methylglutamine.

It belongs to the universal ribosomal protein uL3 family. Part of the 50S ribosomal subunit. Forms a cluster with proteins L14 and L19. Post-translationally, methylated by PrmB.

Functionally, one of the primary rRNA binding proteins, it binds directly near the 3'-end of the 23S rRNA, where it nucleates assembly of the 50S subunit. The polypeptide is Large ribosomal subunit protein uL3 (Polynucleobacter necessarius subsp. necessarius (strain STIR1)).